The primary structure comprises 111 residues: Cytochrome c (111 aa).

Ala1 bears the N-acetylalanine mark. The heme c site is built by Cys22, Cys25, and His26. An N6,N6,N6-trimethyllysine modification is found at Lys80. Met88 serves as a coordination point for heme c. N6,N6,N6-trimethyllysine is present on Lys94.

It belongs to the cytochrome c family. In terms of processing, binds 1 heme c group covalently per subunit.

The protein resides in the mitochondrion intermembrane space. Functionally, electron carrier protein. The oxidized form of the cytochrome c heme group can accept an electron from the heme group of the cytochrome c1 subunit of cytochrome reductase. Cytochrome c then transfers this electron to the cytochrome oxidase complex, the final protein carrier in the mitochondrial electron-transport chain. In Guizotia abyssinica (Niger), this protein is Cytochrome c.